A 362-amino-acid chain; its full sequence is Bifunctional nitrilase/nitrile hydratase NIT4 (362 aa).

The CN hydrolase domain occupies 31–307 (VRATVVQAST…EALITADLDL (277 aa)). Glu71 functions as the Proton acceptor in the catalytic mechanism. Lys162 (proton donor) is an active-site residue. Cys196 functions as the Nucleophile in the catalytic mechanism.

The protein belongs to the carbon-nitrogen hydrolase superfamily. Nitrilase family.

It carries out the reaction a nitrile + 2 H2O = a carboxylate + NH4(+). It catalyses the reaction 3-cyano-L-alanine + 2 H2O = L-aspartate + NH4(+). Its function is as follows. Highly specific for beta-cyano-L-alanine (Ala(CN)). Low activity with 3-phenylpropionitrile (PPN). Not associated with auxin production but may be involved in cyanide detoxification. The sequence is that of Bifunctional nitrilase/nitrile hydratase NIT4 (NIT4) from Oryza sativa subsp. japonica (Rice).